The chain runs to 658 residues: ATP-dependent RNA helicase MSS116, mitochondrial (658 aa).

Residues 1 to 35 (MFRVTGIATARAVALQPFRAPLGVIRRFGISATAS) constitute a mitochondrion transit peptide. The span at 40 to 79 (HGHDMQSRNGSRWDSRRQGDRRSSRWEGRGSDREDGERGS) shows a compositional bias: basic and acidic residues. Positions 40 to 104 (HGHDMQSRNG…DGAAREGFSL (65 aa)) are disordered. Residues 126–154 (TLVEEGVLSNELYEMLQSRGFDKLTPVQQ) carry the Q motif motif. In terms of domain architecture, Helicase ATP-binding spans 158–343 (KPILQTEHDV…NSIMNHAKCL (186 aa)). An ATP-binding site is contributed by 171–178 (AKTGTGKT). The short motif at 284 to 287 (DEAD) is the DEAD box element. The Helicase C-terminal domain occupies 372 to 528 (NITASLYKIR…TFDAAAQELS (157 aa)).

It belongs to the DEAD box helicase family. DDX18/HAS1 subfamily.

The protein localises to the mitochondrion matrix. The catalysed reaction is ATP + H2O = ADP + phosphate + H(+). Its function is as follows. ATP-dependent RNA helicase required for mitochondrial splicing of group I and II introns. Also required for efficient mitochondrial translation. This is ATP-dependent RNA helicase MSS116, mitochondrial (MSS116) from Eremothecium gossypii (strain ATCC 10895 / CBS 109.51 / FGSC 9923 / NRRL Y-1056) (Yeast).